The sequence spans 685 residues: DNA topoisomerase 4 subunit B (685 aa).

A compositionally biased stretch (basic and acidic residues) spans E389 to N400. The disordered stretch occupies residues E389–E427. Residues N426–P540 enclose the Toprim domain. The Mg(2+) site is built by E432, D505, and D507. 2 stretches are compositionally biased toward acidic residues: residues G644–T654 and Q673–E685. Positions G644–E685 are disordered.

The protein belongs to the type II topoisomerase family. ParE type 1 subfamily. In terms of assembly, heterotetramer composed of ParC and ParE. Mg(2+) serves as cofactor. The cofactor is Mn(2+). Requires Ca(2+) as cofactor.

The enzyme catalyses ATP-dependent breakage, passage and rejoining of double-stranded DNA.. With respect to regulation, pyrrolopyrimidines inhibit both GyrB and its paralog in topoisomerase IV (parE). Topoisomerase IV is essential for chromosome segregation. It relaxes supercoiled DNA. Performs the decatenation events required during the replication of a circular DNA molecule. The chain is DNA topoisomerase 4 subunit B from Enterococcus faecalis (strain ATCC 700802 / V583).